Reading from the N-terminus, the 379-residue chain is Queuine tRNA-ribosyltransferase (379 aa).

Asp94 functions as the Proton acceptor in the catalytic mechanism. Residues 94–98 (DSGGF), Asp148, Gln191, and Gly218 contribute to the substrate site. The interval 249–255 (GVGSPDS) is RNA binding. Residue Asp268 is the Nucleophile of the active site. The tract at residues 273 to 277 (TRIAR) is RNA binding; important for wobble base 34 recognition. Zn(2+)-binding residues include Cys306, Cys308, Cys311, and His337.

It belongs to the queuine tRNA-ribosyltransferase family. Homodimer. Within each dimer, one monomer is responsible for RNA recognition and catalysis, while the other monomer binds to the replacement base PreQ1. It depends on Zn(2+) as a cofactor.

It catalyses the reaction 7-aminomethyl-7-carbaguanine + guanosine(34) in tRNA = 7-aminomethyl-7-carbaguanosine(34) in tRNA + guanine. It participates in tRNA modification; tRNA-queuosine biosynthesis. Functionally, catalyzes the base-exchange of a guanine (G) residue with the queuine precursor 7-aminomethyl-7-deazaguanine (PreQ1) at position 34 (anticodon wobble position) in tRNAs with GU(N) anticodons (tRNA-Asp, -Asn, -His and -Tyr). Catalysis occurs through a double-displacement mechanism. The nucleophile active site attacks the C1' of nucleotide 34 to detach the guanine base from the RNA, forming a covalent enzyme-RNA intermediate. The proton acceptor active site deprotonates the incoming PreQ1, allowing a nucleophilic attack on the C1' of the ribose to form the product. After dissociation, two additional enzymatic reactions on the tRNA convert PreQ1 to queuine (Q), resulting in the hypermodified nucleoside queuosine (7-(((4,5-cis-dihydroxy-2-cyclopenten-1-yl)amino)methyl)-7-deazaguanosine). The protein is Queuine tRNA-ribosyltransferase of Bacillus cytotoxicus (strain DSM 22905 / CIP 110041 / 391-98 / NVH 391-98).